Reading from the N-terminus, the 328-residue chain is Arabinose 5-phosphate isomerase KdsD (328 aa).

The 143-residue stretch at 42 to 184 (CEKMFWCKGK…AVALLKARGF (143 aa)) folds into the SIS domain. Substrate contacts are provided by residues 75–76 (GT), H82, H88, 114–123 (ALIPVLKRLH), 148–150 (KVA), T222, and D275. Residue H82 coordinates Zn(2+). Positions 210–268 (MHTGDEIPHVKKTASLRDALLEVTRKNLGMTVICDDNMMIEGIFTDGDLRRVFDMGVDV) constitute a CBS 1 domain. A CBS 2 domain is found at 277 to 328 (MTPGGIRVRPGILAVEALNLMQSRHITSVMVADGDHLLGVLHMHDLLRAGVV).

It belongs to the SIS family. GutQ/KpsF subfamily. In terms of assembly, homotetramer.

The enzyme catalyses D-arabinose 5-phosphate = D-ribulose 5-phosphate. The protein operates within carbohydrate biosynthesis; 3-deoxy-D-manno-octulosonate biosynthesis; 3-deoxy-D-manno-octulosonate from D-ribulose 5-phosphate: step 1/3. It participates in bacterial outer membrane biogenesis; lipopolysaccharide biosynthesis. Functionally, involved in the biosynthesis of 3-deoxy-D-manno-octulosonate (KDO), a unique 8-carbon sugar component of lipopolysaccharides (LPSs). Catalyzes the reversible aldol-ketol isomerization between D-ribulose 5-phosphate (Ru5P) and D-arabinose 5-phosphate (A5P). This is Arabinose 5-phosphate isomerase KdsD (kdsD) from Shigella flexneri.